The following is a 224-amino-acid chain: Protein GrpE (224 aa).

The tract at residues 27-77 (NQASEDIDQENQSEVVDDTTENEDASEEVYEEDTASEDGSKEKKSFFKKKE) is disordered. The span at 31-62 (EDIDQENQSEVVDDTTENEDASEEVYEEDTAS) shows a compositional bias: acidic residues.

It belongs to the GrpE family. As to quaternary structure, homodimer.

Its subcellular location is the cytoplasm. Its function is as follows. Participates actively in the response to hyperosmotic and heat shock by preventing the aggregation of stress-denatured proteins, in association with DnaK and GrpE. It is the nucleotide exchange factor for DnaK and may function as a thermosensor. Unfolded proteins bind initially to DnaJ; upon interaction with the DnaJ-bound protein, DnaK hydrolyzes its bound ATP, resulting in the formation of a stable complex. GrpE releases ADP from DnaK; ATP binding to DnaK triggers the release of the substrate protein, thus completing the reaction cycle. Several rounds of ATP-dependent interactions between DnaJ, DnaK and GrpE are required for fully efficient folding. In Lachnoclostridium phytofermentans (strain ATCC 700394 / DSM 18823 / ISDg) (Clostridium phytofermentans), this protein is Protein GrpE.